The primary structure comprises 413 residues: Eukaryotic initiation factor 4A-10 (413 aa).

The Q motif motif lies at 40–68; that stretch reads DSFDAMGLQENLLRGIYAYGFEKPSAIQQ. Residues 71 to 241 enclose the Helicase ATP-binding domain; sequence IVPFCKGLDV…RKFMNKPVRI (171 aa). 84–91 lines the ATP pocket; the sequence is AQSGTGKT. The DEAD box signature appears at 189–192; the sequence is DEAD. In terms of domain architecture, Helicase C-terminal spans 252–413; the sequence is GIKQFYVNVD…ELPANVADLL (162 aa).

It belongs to the DEAD box helicase family. eIF4A subfamily. In terms of assembly, eIF4F is a multi-subunit complex, the composition of which varies with external and internal environmental conditions. It is composed of at least EIF4A, EIF4E and EIF4G.

It catalyses the reaction ATP + H2O = ADP + phosphate + H(+). In terms of biological role, ATP-dependent RNA helicase which is a subunit of the eIF4F complex involved in cap recognition and is required for mRNA binding to ribosome. In the current model of translation initiation, eIF4A unwinds RNA secondary structures in the 5'-UTR of mRNAs which is necessary to allow efficient binding of the small ribosomal subunit, and subsequent scanning for the initiator codon. The sequence is that of Eukaryotic initiation factor 4A-10 from Nicotiana tabacum (Common tobacco).